Here is a 415-residue protein sequence, read N- to C-terminus: Acetylornithine aminotransferase (415 aa).

Residues 115-116 (GA) and Phe148 each bind pyridoxal 5'-phosphate. Arg151 contributes to the N(2)-acetyl-L-ornithine binding site. 239 to 242 (DEVQ) serves as a coordination point for pyridoxal 5'-phosphate. Residue Lys268 is modified to N6-(pyridoxal phosphate)lysine. Ser295 contacts N(2)-acetyl-L-ornithine. Thr296 provides a ligand contact to pyridoxal 5'-phosphate.

The protein belongs to the class-III pyridoxal-phosphate-dependent aminotransferase family. ArgD subfamily. As to quaternary structure, homodimer. Pyridoxal 5'-phosphate serves as cofactor.

Its subcellular location is the cytoplasm. The enzyme catalyses N(2)-acetyl-L-ornithine + 2-oxoglutarate = N-acetyl-L-glutamate 5-semialdehyde + L-glutamate. Its pathway is amino-acid biosynthesis; L-arginine biosynthesis; N(2)-acetyl-L-ornithine from L-glutamate: step 4/4. This Prochlorococcus marinus subsp. pastoris (strain CCMP1986 / NIES-2087 / MED4) protein is Acetylornithine aminotransferase.